Here is a 468-residue protein sequence, read N- to C-terminus: ATP synthase subunit beta (468 aa).

150 to 157 (GGAGVGKT) provides a ligand contact to ATP.

The protein belongs to the ATPase alpha/beta chains family. F-type ATPases have 2 components, CF(1) - the catalytic core - and CF(0) - the membrane proton channel. CF(1) has five subunits: alpha(3), beta(3), gamma(1), delta(1), epsilon(1). CF(0) has three main subunits: a(1), b(2) and c(9-12). The alpha and beta chains form an alternating ring which encloses part of the gamma chain. CF(1) is attached to CF(0) by a central stalk formed by the gamma and epsilon chains, while a peripheral stalk is formed by the delta and b chains.

Its subcellular location is the cell inner membrane. The enzyme catalyses ATP + H2O + 4 H(+)(in) = ADP + phosphate + 5 H(+)(out). Its function is as follows. Produces ATP from ADP in the presence of a proton gradient across the membrane. The catalytic sites are hosted primarily by the beta subunits. In Acidovorax ebreus (strain TPSY) (Diaphorobacter sp. (strain TPSY)), this protein is ATP synthase subunit beta.